We begin with the raw amino-acid sequence, 927 residues long: Probable dipeptidyl-aminopeptidase B (927 aa).

2 disordered regions span residues 1-44 (MAPA…TTSI) and 58-101 (GHFE…KNDG). Residues 1–108 (MAPAPGMAPY…NDGMNRGMRR (108 aa)) lie on the Cytoplasmic side of the membrane. Basic and acidic residues-rich tracts occupy residues 19-36 (HRPEHNDESTGRMSHESE) and 58-70 (GHFELDDHDPMKE). The chain crosses the membrane as a helical; Signal-anchor for type II membrane protein span at residues 109-129 (TLIIVAGLLISAWVVGLFFYV). Over 130–927 (SHKSYKPASQ…RSIQPILPIL (798 aa)) the chain is Vacuolar. N-linked (GlcNAc...) asparagine glycosylation is found at Asn365 and Asn530. Residue Ser769 is the Charge relay system of the active site. Asn828 carries N-linked (GlcNAc...) asparagine glycosylation. Catalysis depends on charge relay system residues Asp846 and His879.

Belongs to the peptidase S9B family.

The protein resides in the vacuole membrane. The catalysed reaction is Release of an N-terminal dipeptide, Xaa-Yaa-|-Zaa-, from a polypeptide, preferentially when Yaa is Pro, provided Zaa is neither Pro nor hydroxyproline.. In terms of biological role, type IV dipeptidyl-peptidase which removes N-terminal dipeptides sequentially from polypeptides having unsubstituted N-termini provided that the penultimate residue is proline. The polypeptide is Probable dipeptidyl-aminopeptidase B (DAPB) (Podospora anserina (strain S / ATCC MYA-4624 / DSM 980 / FGSC 10383) (Pleurage anserina)).